The following is a 118-amino-acid chain: NADPH-dependent 7-cyano-7-deazaguanine reductase (118 aa).

Cys-31 acts as the Thioimide intermediate in catalysis. Asp-38 acts as the Proton donor in catalysis. Substrate-binding positions include 53–55 (IEL) and 72–73 (YE).

It belongs to the GTP cyclohydrolase I family. QueF type 1 subfamily.

The protein localises to the cytoplasm. The enzyme catalyses 7-aminomethyl-7-carbaguanine + 2 NADP(+) = 7-cyano-7-deazaguanine + 2 NADPH + 3 H(+). It functions in the pathway tRNA modification; tRNA-queuosine biosynthesis. Its function is as follows. Catalyzes the NADPH-dependent reduction of 7-cyano-7-deazaguanine (preQ0) to 7-aminomethyl-7-deazaguanine (preQ1). In Prosthecochloris aestuarii (strain DSM 271 / SK 413), this protein is NADPH-dependent 7-cyano-7-deazaguanine reductase.